We begin with the raw amino-acid sequence, 292 residues long: Protease HtpX (292 aa).

2 consecutive transmembrane segments (helical) span residues 4–24 (IALF…VLSL) and 34–54 (GLMI…LLMS). His139 provides a ligand contact to Zn(2+). The active site involves Glu140. His143 serves as a coordination point for Zn(2+). The next 2 membrane-spanning stretches (helical) occupy residues 158-178 (IVNT…AGFL) and 192-212 (MIYF…ASII). Glu221 is a Zn(2+) binding site.

The protein belongs to the peptidase M48B family. Zn(2+) is required as a cofactor.

The protein resides in the cell inner membrane. In Serratia proteamaculans (strain 568), this protein is Protease HtpX.